We begin with the raw amino-acid sequence, 552 residues long: Beta-hexosaminidase A (552 aa).

Residues 1-15 form the signal peptide; the sequence is MRLIVLSLLFTSTLA. N-linked (GlcNAc...) asparagine glycosylation is present at Asn-44. Glu-322 acts as the Proton donor in catalysis. Asn-348, Asn-409, and Asn-457 each carry an N-linked (GlcNAc...) asparagine glycan.

It belongs to the glycosyl hydrolase 20 family.

The protein resides in the lysosome. The catalysed reaction is Hydrolysis of terminal non-reducing N-acetyl-D-hexosamine residues in N-acetyl-beta-D-hexosaminides.. Responsible for the degradation of GM2 gangliosides, and a variety of other molecules containing terminal N-acetyl hexosamines. Degrades chitotriose. In Caenorhabditis briggsae, this protein is Beta-hexosaminidase A.